Consider the following 112-residue polypeptide: Putative inner membrane protein YafU (112 aa).

Residues 1–21 (MSSERDLVNFLGDFSMDVAKA) lie on the Cytoplasmic side of the membrane. The helical transmembrane segment at 22–42 (VIAGGVATAIGSLASFACVSF) threads the bilayer. Residue Gly43 is a topological domain, periplasmic. A helical transmembrane segment spans residues 44–64 (FPVILVGGAILLTGIVCTVVL). The Cytoplasmic segment spans residues 65–112 (NEIDAQCHLSEKLKYAIRDGLKRQQELDKWKRENMTPFMYVLNTPPVI).

The protein localises to the cell inner membrane. In Escherichia coli (strain K12), this protein is Putative inner membrane protein YafU (yafU).